Here is a 152-residue protein sequence, read N- to C-terminus: Ribosomal RNA large subunit methyltransferase H (152 aa).

S-adenosyl-L-methionine contacts are provided by residues Leu-71, Gly-101, and 120 to 125 (LSKLTF).

The protein belongs to the RNA methyltransferase RlmH family. Homodimer.

It is found in the cytoplasm. It catalyses the reaction pseudouridine(1915) in 23S rRNA + S-adenosyl-L-methionine = N(3)-methylpseudouridine(1915) in 23S rRNA + S-adenosyl-L-homocysteine + H(+). Its function is as follows. Specifically methylates the pseudouridine at position 1915 (m3Psi1915) in 23S rRNA. In Thermosipho melanesiensis (strain DSM 12029 / CIP 104789 / BI429), this protein is Ribosomal RNA large subunit methyltransferase H.